The primary structure comprises 436 residues: UPF0597 protein YhaM (436 aa).

This sequence belongs to the UPF0597 family.

This is UPF0597 protein YhaM from Shigella boydii serotype 4 (strain Sb227).